The following is a 29-amino-acid chain: Cytochrome b6-f complex subunit 8 (29 aa).

A helical membrane pass occupies residues 3–23; that stretch reads LITITWASVMVAFTFSLSLVV.

Belongs to the PetN family. The 4 large subunits of the cytochrome b6-f complex are cytochrome b6, subunit IV (17 kDa polypeptide, PetD), cytochrome f and the Rieske protein, while the 4 small subunits are PetG, PetL, PetM and PetN. The complex functions as a dimer.

The protein resides in the plastid. It is found in the chloroplast thylakoid membrane. Functionally, component of the cytochrome b6-f complex, which mediates electron transfer between photosystem II (PSII) and photosystem I (PSI), cyclic electron flow around PSI, and state transitions. This Chaetosphaeridium globosum (Charophycean green alga) protein is Cytochrome b6-f complex subunit 8.